The following is a 209-amino-acid chain: Uracil phosphoribosyltransferase (209 aa).

5-phospho-alpha-D-ribose 1-diphosphate-binding positions include Arg79, Arg104, and 131 to 139 (DPMLATGAS). Residues Ile194 and 199-201 (GDA) each bind uracil. Asp200 contributes to the 5-phospho-alpha-D-ribose 1-diphosphate binding site.

Belongs to the UPRTase family. Mg(2+) serves as cofactor.

It carries out the reaction UMP + diphosphate = 5-phospho-alpha-D-ribose 1-diphosphate + uracil. The protein operates within pyrimidine metabolism; UMP biosynthesis via salvage pathway; UMP from uracil: step 1/1. Allosterically activated by GTP. Functionally, catalyzes the conversion of uracil and 5-phospho-alpha-D-ribose 1-diphosphate (PRPP) to UMP and diphosphate. The sequence is that of Uracil phosphoribosyltransferase from Staphylococcus carnosus (strain TM300).